We begin with the raw amino-acid sequence, 556 residues long: Peptide chain release factor 3 (556 aa).

The 270-residue stretch at 28 to 297 (QQRRNFAIIS…AFLDYALKPG (270 aa)) folds into the tr-type G domain. GTP-binding positions include 37–44 (SHPDAGKT), 105–109 (DTPGH), and 159–162 (NKMD).

This sequence belongs to the TRAFAC class translation factor GTPase superfamily. Classic translation factor GTPase family. PrfC subfamily.

The protein resides in the cytoplasm. Its function is as follows. Increases the formation of ribosomal termination complexes and stimulates activities of RF-1 and RF-2. It binds guanine nucleotides and has strong preference for UGA stop codons. It may interact directly with the ribosome. The stimulation of RF-1 and RF-2 is significantly reduced by GTP and GDP, but not by GMP. This chain is Peptide chain release factor 3, found in Synechococcus sp. (strain ATCC 27144 / PCC 6301 / SAUG 1402/1) (Anacystis nidulans).